The chain runs to 153 residues: Actin-related protein 2/3 complex subunit 5-like protein (153 aa).

Ser-64 bears the Phosphoserine mark.

This sequence belongs to the ARPC5 family. May be a component of the Arp2/3 complex in which it may replace ARPC5.

It is found in the cytoplasm. Its subcellular location is the cytoskeleton. In terms of biological role, may function as component of the Arp2/3 complex which is involved in regulation of actin polymerization and together with an activating nucleation-promoting factor (NPF) mediates the formation of branched actin networks. The protein is Actin-related protein 2/3 complex subunit 5-like protein (ARPC5L) of Pongo abelii (Sumatran orangutan).